Reading from the N-terminus, the 746-residue chain is Mediator of RNA polymerase II transcription subunit 25 (746 aa).

The tract at residues 1-226 is interaction with the Mediator complex; that stretch reads MVPGSEGPAR…PRHMVLVRGL (226 aa). Disordered regions lie at residues 233 to 273 and 298 to 390; these read GSAP…QQYQ and GLGP…PALG. The span at 238–251 shows a compositional bias: pro residues; that stretch reads PLQPKQPVPLPPAA. Low complexity predominate over residues 252-262; it reads PAGATLSTAPQ. Pro residues predominate over residues 329–342; the sequence is PPGPPGAPKPPPAS. Low complexity predominate over residues 343 to 354; sequence QPSLVSTVAPGP. An interaction with VP16 region spans residues 389 to 543; sequence LGGQQSVSNK…VNGIRQVITN (155 aa). An interaction with CREBBP region spans residues 395–545; that stretch reads VSNKLLAWSG…GIRQVITNHK (151 aa). Residues 548 to 746 are disordered; sequence QQQKLEQQRG…MEDDILMDLI (199 aa). Interaction with RARA regions lie at residues 563–652 and 639–706; these read APPG…LLNP and PGAN…WPAQ. The segment covering 599-610 has biased composition (low complexity); that stretch reads AAAGQPQPQGAA. The span at 611-633 shows a compositional bias: pro residues; it reads PAPPGAPQGPPGAAPGPPPPGPL. The LXXLL motif motif lies at 645 to 649; the sequence is LRSLL. Pro residues-rich tracts occupy residues 651–663, 672–682, and 690–701; these read NPPP…PPPQ, PGAPALLPPPH, and LGPPLLHPPPAQ. Asymmetric dimethylarginine is present on Arg724. Over residues 737 to 746 the composition is skewed to acidic residues; it reads MEDDILMDLI.

This sequence belongs to the Mediator complex subunit 25 family. As to quaternary structure, component of the Mediator complex, which is composed of MED1, MED4, MED6, MED7, MED8, MED9, MED10, MED11, MED12, MED13, MED13L, MED14, MED15, MED16, MED17, MED18, MED19, MED20, MED21, MED22, MED23, MED24, MED25, MED26, MED27, MED29, MED30, MED31, CCNC, CDK8 and CDC2L6/CDK11. The MED12, MED13, CCNC and CDK8 subunits form a distinct module termed the CDK8 module. Mediator containing the CDK8 module is less active than Mediator lacking this module in supporting transcriptional activation. Individual preparations of the Mediator complex lacking one or more distinct subunits have been variously termed ARC, CRSP, DRIP, PC2, SMCC and TRAP. Interacts with CREBBP. Interacts with ESR1, GR, RARA, RXRA and THRB in a ligand-dependent fashion. Binds the Herpes simplex virus activator VP16.

It is found in the nucleus. Functionally, component of the Mediator complex, a coactivator involved in the regulated transcription of nearly all RNA polymerase II-dependent genes. Mediator functions as a bridge to convey information from gene-specific regulatory proteins to the basal RNA polymerase II transcription machinery. Mediator is recruited to promoters by direct interactions with regulatory proteins and serves as a scaffold for the assembly of a functional preinitiation complex with RNA polymerase II and the general transcription factors. Required for RARA/RXRA-mediated transcription. This is Mediator of RNA polymerase II transcription subunit 25 (MED25) from Bos taurus (Bovine).